Here is a 357-residue protein sequence, read N- to C-terminus: Trans-enoyl reductase buaC (357 aa).

50–53 (VDTK) provides a ligand contact to NADP(+). 135-142 (TALVSACM) provides a ligand contact to substrate. NADP(+) contacts are provided by residues 170–173 (STAT), 193–196 (SPKN), Tyr-211, and 258–259 (LN). Residue 278-282 (ATLIT) participates in substrate binding. 347-348 (IS) is a binding site for NADP(+).

The protein belongs to the zinc-containing alcohol dehydrogenase family. Monomer.

Its pathway is mycotoxin biosynthesis. In terms of biological role, trans-enoyl reductase; part of the gene cluster that mediates the biosynthesis of burnettramic acids, an unusual class of bolaamphiphilic pyrrolizidinediones that display potent antibacterial, antifungal, and cytotoxic activities. The first step of the biosynthesis of burnettramic acids is the hydroxylation of proline by the proline hydroxylase buaE to generate 4-hydroxyproline. The PKS-NRPS buaA and trans-enoyl reductase buaC construct the highly reduced polyketide chain, and the condensation (C) domain of buaA then catalyzes the amide bond formation with the activated 4-hydroxyproline. This is followed by the R domain releasing the nascent polyketide-peptide directly via a Dieckmann condensation to afford a tetramic acid fused to the hydroxyproline, generating the bicyclic pyrrolidinedione moiety. The cytochrome P450 monooxygenases buaD and buaG are likely responsible for the multiple hydroxylations on the polyketide chain and its terminus, although in the heterologous context, buaD does not appear to be required. Therefore, while buaG may be a multifunctional cytochrome P450 monooxygenase, it cannot be ruled out that the two secondary alcohols on the polyketide chain could have an acetate origin. Finally, the glycosyltransferase buaB transfers beta-D-mannose to the aglycone burnettramic acid A to form burnettramic acid A. Burnettramic acid B is a minor cis-pyrrolizidine epimer of burnettramic acid A and it is likely that small amounts of it form naturally in acidic environments. This Petromyces alliaceus (Aspergillus alliaceus) protein is Trans-enoyl reductase buaC.